The chain runs to 423 residues: Lipoyl synthase 1, mitochondrial (423 aa).

[4Fe-4S] cluster contacts are provided by Cys-127, Cys-132, Cys-138, Cys-159, Cys-163, Cys-166, and Ser-375. The Radical SAM core domain maps to Asp-142–Leu-364.

The protein belongs to the radical SAM superfamily. Lipoyl synthase family. Requires [4Fe-4S] cluster as cofactor.

It is found in the mitochondrion. The catalysed reaction is [[Fe-S] cluster scaffold protein carrying a second [4Fe-4S](2+) cluster] + N(6)-octanoyl-L-lysyl-[protein] + 2 oxidized [2Fe-2S]-[ferredoxin] + 2 S-adenosyl-L-methionine + 4 H(+) = [[Fe-S] cluster scaffold protein] + N(6)-[(R)-dihydrolipoyl]-L-lysyl-[protein] + 4 Fe(3+) + 2 hydrogen sulfide + 2 5'-deoxyadenosine + 2 L-methionine + 2 reduced [2Fe-2S]-[ferredoxin]. It participates in protein modification; protein lipoylation via endogenous pathway; protein N(6)-(lipoyl)lysine from octanoyl-[acyl-carrier-protein]: step 2/2. Functionally, catalyzes the radical-mediated insertion of two sulfur atoms into the C-6 and C-8 positions of the octanoyl moiety bound to the lipoyl domains of lipoate-dependent enzymes, thereby converting the octanoylated domains into lipoylated derivatives. This Trypanosoma cruzi (strain CL Brener) protein is Lipoyl synthase 1, mitochondrial.